Here is a 143-residue protein sequence, read N- to C-terminus: MAKKIIGFIKLQVPAGKANPSPPIGPALGQRGLNIMEFCKAFNAQTQGVEPGMPIPVVITAFADKSFTFVMKTPPATYLIKKHSGVTKGSPKPHTDKVGKLTRAQAEEIAKLKAPDLTAADLDAAVRTIAGSARSMGITVEGL.

It belongs to the universal ribosomal protein uL11 family. Part of the ribosomal stalk of the 50S ribosomal subunit. Interacts with L10 and the large rRNA to form the base of the stalk. L10 forms an elongated spine to which L12 dimers bind in a sequential fashion forming a multimeric L10(L12)X complex. Post-translationally, one or more lysine residues are methylated.

Functionally, forms part of the ribosomal stalk which helps the ribosome interact with GTP-bound translation factors. The protein is Large ribosomal subunit protein uL11 of Janthinobacterium sp. (strain Marseille) (Minibacterium massiliensis).